Here is an 851-residue protein sequence, read N- to C-terminus: Alanine--tRNA ligase (851 aa).

Residues histidine 535, histidine 539, cysteine 637, and histidine 641 each contribute to the Zn(2+) site.

Belongs to the class-II aminoacyl-tRNA synthetase family. It depends on Zn(2+) as a cofactor.

It localises to the cytoplasm. It carries out the reaction tRNA(Ala) + L-alanine + ATP = L-alanyl-tRNA(Ala) + AMP + diphosphate. Functionally, catalyzes the attachment of alanine to tRNA(Ala) in a two-step reaction: alanine is first activated by ATP to form Ala-AMP and then transferred to the acceptor end of tRNA(Ala). Also edits incorrectly charged Ser-tRNA(Ala) and Gly-tRNA(Ala) via its editing domain. The chain is Alanine--tRNA ligase from Acholeplasma laidlawii (strain PG-8A).